Consider the following 206-residue polypeptide: Ubiquitin-conjugating enzyme E2 S (206 aa).

In terms of domain architecture, UBC core spans 14 to 160 (QTIRQVMKEL…ARMMTEIHAQ (147 aa)). C98 serves as the catalytic Glycyl thioester intermediate. The disordered stretch occupies residues 165–191 (GVSDAKDDDGPSNKKHAGLDKKLQDKK). Residues 168–191 (DAKDDDGPSNKKHAGLDKKLQDKK) show a composition bias toward basic and acidic residues.

Belongs to the ubiquitin-conjugating enzyme family.

The enzyme catalyses S-ubiquitinyl-[E1 ubiquitin-activating enzyme]-L-cysteine + [E2 ubiquitin-conjugating enzyme]-L-cysteine = [E1 ubiquitin-activating enzyme]-L-cysteine + S-ubiquitinyl-[E2 ubiquitin-conjugating enzyme]-L-cysteine.. Its pathway is protein modification; protein ubiquitination. Its function is as follows. Catalyzes the covalent attachment of ubiquitin to other proteins. Acts as an essential factor of the anaphase promoting complex/cyclosome (APC/C), a cell cycle-regulated ubiquitin ligase that controls progression through mitosis. Acts by specifically elongating polyubiquitin chains initiated by the E2 enzyme vih/UbcH10 on APC/C substrates, enhancing the degradation of APC/C substrates by the proteasome and promoting mitotic exit. The chain is Ubiquitin-conjugating enzyme E2 S from Drosophila mojavensis (Fruit fly).